The chain runs to 145 residues: Pseudoazurin (145 aa).

Residues 1-22 (MFHHSLAAAAAALLALAAPGFA) form the signal peptide. In terms of domain architecture, Plastocyanin-like spans 27–115 (VHMLNKGESG…MGMVGLVQVG (89 aa)). Positions 62, 100, 103, and 108 each coordinate Cu cation. The interval 126–145 (TAKMPKKARERMDAELAQVN) is disordered.

In terms of assembly, homodimer. Requires Cu cation as cofactor.

The protein resides in the periplasm. Functionally, this soluble electron transfer copper protein is required for the inactivation of copper-containing nitrite reductase in the presence of oxygen. In Paracoccus pantotrophus (Thiosphaera pantotropha), this protein is Pseudoazurin (pazS).